We begin with the raw amino-acid sequence, 1098 residues long: MLEADLVSKMLRAVLQSHKNGIALPRLQGEYRSLTGDWIPFKQLGYPTLEAYLRSVPAVVRIETSRSGEVTCYAVACTETARIAQLVARQRSSKRKTGRQVNCQMRVKKTMPFFLEGKPKATLRQPGFSSDFSVSKKPNSTLLRNKGISLGVKSDAEVLPYTLQTTIGNEVFKDVPVQSHMTMSTNNRFSPKASLPPRFQMHLSRTCTKEMSDNLNQAVEKPNVTPPASYTYKMDEVQNRIKEILNKHSNGIWISKLPHFYKELYKEELNQGILQQFEHWPHICTVEKPCSGGQDLLLYPAKRKQLLRSELNTEKVPPSPLPAPKQIPPLKGCPAVMPGDFKEKVAELLVKYSSGLWASALPKTFEDMYKVKLPEDALKNLDLLSDVCTVDYISGNPQKAILYAKLPSPADKILKDAEQAHGNYDIKSTVEQEYLQIEENIAESTDTFMETVTIPPLIIPTETSPSVLVVELSNTNEVVIRYVGKDYSAAQELMEDEMKEYYSKNSKVTPVQTVQIGQLLAVNAEEDAWLRAQVISMEEGKIKVCYVDYGFSENVEKSKAYRLNPKFCSLSFQATKCKLAGLEVLSDDPDLVKVVESLTCGKIFAVEILEKTDIPLVVLYDTSGEDDININATCLKAICDKSLEVHLQVDAMYTNVRVTNICSDGTLYCQVPCKGLNKLNDLLHKIEEYFHCKHMTSEYFVSLPFCGKVCLFHCKGKWLRVEITNVHSSRALDVQFLDAGTVTSVKVSELREIPPRFLQEMISVPPQAIKCCLADLPQSIGMWTPDAVLWLRDSVLNCSDCSIKVTKVDETRGIAHIYLFTPKNFPDPHRSINRQITNADLWKHQKDVFLSAISSGASSPNTKSANTPILGNTGETFRKSLTDVLKKSVVNHPSSFFTKELPPPVHLSKPGEHMDVYVPVACHPGYFVIQPWQEIHKLEVLMEEMILYYSVSEERHVAVEKDQVYAAKVENKWHRVLLKGILTNGLVSVYELDYGKHELVNMRKVQPLADMFRKLPFQAVTAQLAGVKCNQWSEEASMVFRNHVEKKPLVALVQTVIENTNPWDRKVVVYLVDTSLPDTDIWIHDFMSEYLVELSKVN.

HTH OST-type domains lie at 3–76 (EADL…YAVA) and 233–302 (KMDE…YPAK). At Ser-319 the chain carries Phosphoserine. In terms of domain architecture, HTH OST-type 3 spans 337–406 (MPGDFKEKVA…PQKAILYAKL (70 aa)). 2 Tudor domains span residues 513–570 (TVQI…FCSL) and 703–760 (LPFC…FLQE). Ser-859 bears the Phosphoserine mark. Residues 861–1098 (NTKSANTPIL…EYLVELSKVN (238 aa)) are interaction with CDK17. Residues 893–1098 (PSSFFTKELP…EYLVELSKVN (206 aa)) form an interaction with CABLES1 region.

Belongs to the TDRD7 family. As to quaternary structure, found in a mRNP complex, at least composed of TDRD1, TDRD6, TDRD7 and DDX4. Found in a complex containing CABLES1, CDK16 and CDK17. Interacts with CABLES1, CDK17 and PIWIL1.

Its subcellular location is the cytoplasm. Its function is as follows. Component of specific cytoplasmic RNA granules involved in post-transcriptional regulation of specific genes: probably acts by binding to specific mRNAs and regulating their translation. Required for lens transparency during lens development, by regulating translation of genes such as CRYBB3 and HSPB1 in the developing lens. Also required during spermatogenesis. This Bos taurus (Bovine) protein is Tudor domain-containing protein 7 (TDRD7).